Reading from the N-terminus, the 217-residue chain is LexA repressor (217 aa).

Positions Phe-26–Lys-46 form a DNA-binding region, H-T-H motif. Active-site for autocatalytic cleavage activity residues include Ser-138 and Lys-176.

It belongs to the peptidase S24 family. In terms of assembly, homodimer.

It catalyses the reaction Hydrolysis of Ala-|-Gly bond in repressor LexA.. In terms of biological role, represses a number of genes involved in the response to DNA damage (SOS response), including recA and lexA. In the presence of single-stranded DNA, RecA interacts with LexA causing an autocatalytic cleavage which disrupts the DNA-binding part of LexA, leading to derepression of the SOS regulon and eventually DNA repair. The protein is LexA repressor of Zymomonas mobilis subsp. mobilis (strain ATCC 31821 / ZM4 / CP4).